Here is a 294-residue protein sequence, read N- to C-terminus: NAD kinase (294 aa).

The active-site Proton acceptor is D74. Residues 74–75, 148–149, H159, R176, D178, and 189–194 each bind NAD(+); these read DG, NE, and TAYSLS.

The protein belongs to the NAD kinase family. A divalent metal cation is required as a cofactor.

The protein localises to the cytoplasm. The enzyme catalyses NAD(+) + ATP = ADP + NADP(+) + H(+). Its function is as follows. Involved in the regulation of the intracellular balance of NAD and NADP, and is a key enzyme in the biosynthesis of NADP. Catalyzes specifically the phosphorylation on 2'-hydroxyl of the adenosine moiety of NAD to yield NADP. The protein is NAD kinase of Pseudoalteromonas translucida (strain TAC 125).